The chain runs to 80 residues: Putative membrane protein insertion efficiency factor (80 aa).

Residues Lys61–Glu80 form a disordered region. Residues Thr62 to Glu80 are compositionally biased toward basic and acidic residues.

It belongs to the UPF0161 family.

It localises to the cell membrane. Its function is as follows. Could be involved in insertion of integral membrane proteins into the membrane. The protein is Putative membrane protein insertion efficiency factor of Streptococcus pneumoniae (strain CGSP14).